The chain runs to 288 residues: 18S rRNA aminocarboxypropyltransferase (288 aa).

S-adenosyl-L-methionine-binding residues include serine 43, valine 91, leucine 114, and tryptophan 129. The span at 209–221 shows a compositional bias: polar residues; it reads IWSAGNLNHKPTL. A disordered region spans residues 209 to 267; it reads IWSAGNLNHKPTLNTSSTHSNSEESRSPLHEPSEASLAHDEHSIPTDDNEETLTNLQAN. The span at 229-253 shows a compositional bias: basic and acidic residues; the sequence is NSEESRSPLHEPSEASLAHDEHSIP.

This sequence belongs to the TDD superfamily. TSR3 family.

It localises to the cytoplasm. The protein localises to the nucleus. The catalysed reaction is an N(1)-methylpseudouridine in rRNA + S-adenosyl-L-methionine = N(1)-methyl-N(3)-[(3S)-3-amino-3-carboxypropyl]pseudouridine in rRNA + S-methyl-5'-thioadenosine + H(+). It catalyses the reaction N(1)-methylpseudouridine(1191) in yeast 18S rRNA + S-adenosyl-L-methionine = N(1)-methyl-N(3)-[(3S)-3-amino-3-carboxypropyl]pseudouridine(1191) in yeast 18S rRNA + S-methyl-5'-thioadenosine + H(+). Aminocarboxypropyltransferase that catalyzes the aminocarboxypropyl transfer on pseudouridine at position 1191 (Psi1191) in 18S rRNA. It constitutes the last step in biosynthesis of the hypermodified N1-methyl-N3-(3-amino-3-carboxypropyl) pseudouridine (m1acp3-Psi) conserved in eukaryotic 18S rRNA. Required for processing 35S pre-rRNA at site D. This Schizosaccharomyces pombe (strain 972 / ATCC 24843) (Fission yeast) protein is 18S rRNA aminocarboxypropyltransferase.